Here is a 363-residue protein sequence, read N- to C-terminus: Type-1 angiotensin II receptor B (363 aa).

Over 1–27 (MLSNISAGENSEVEKIVVKCSKSGMHN) the chain is Extracellular. Residue Asn4 is glycosylated (N-linked (GlcNAc...) asparagine). Disulfide bonds link Cys20-Cys274 and Cys103-Cys182. Residues 28 to 57 (YIFITIPIIYSTIFVVGVFGNSLVVIVIYS) traverse the membrane as a helical segment. At 58 to 63 (YMKMKT) the chain is on the cytoplasmic side. A helical transmembrane segment spans residues 64 to 91 (MASVFLMNLALSDLCFVITLPLWAVYTA). Residues 92 to 100 (MHYHWPFGD) are Extracellular-facing. The helical transmembrane segment at 101 to 127 (LLCKIASTAITLNLYTTVFLLTCLSID) threads the bilayer. Residues 128 to 143 (RYSAIVHPMKSRIRRT) lie on the Cytoplasmic side of the membrane. The chain crosses the membrane as a helical span at residues 144 to 167 (VMVARLTCVGIWLVAFLASLPSVI). The Extracellular portion of the chain corresponds to 168-192 (YRQIFIFPDTNQTVCALVYHSGHIY). Position 169 (Arg169) interacts with angiotensin II. A glycan (N-linked (GlcNAc...) asparagine) is linked at Asn178. The angiotensin II site is built by Tyr186 and Lys201. A helical transmembrane segment spans residues 193–218 (FMVGMSLVKNIVGFFIPFVIILTSYT). Residues 219–239 (LIGKTLKEVYRAQRARNDDIF) lie on the Cytoplasmic side of the membrane. The helical transmembrane segment at 240 to 268 (KMIVAVVLLFFFCWIPHQVFTFLDVLIQM) threads the bilayer. Residues 269–278 (DVIQNCKMYD) are Extracellular-facing. The helical transmembrane segment at 279–304 (IVDTGMPITICIAYFNSCLNPFLYGF) threads the bilayer. Topologically, residues 305-363 (FGKKFRKHFLQLIKYIPPKMRTHASVNTKSSTVSQRLSDTKCASNKIALWIFDIEEHCK) are cytoplasmic. S-palmitoyl cysteine attachment occurs at residues Cys346 and Cys362.

Belongs to the G-protein coupled receptor 1 family. In terms of processing, C-terminal Ser or Thr residues may be phosphorylated. Heart membranes, follicular oocytes.

Its subcellular location is the cell membrane. Functionally, receptor for angiotensin II, a vasoconstricting peptide, which acts as a key regulator of blood pressure and sodium retention by the kidney. The activated receptor in turn couples to G-alpha proteins G(q) (GNAQ, GNA11, GNA14 or GNA15) and thus activates phospholipase C and increases the cytosolic Ca(2+) concentrations, which in turn triggers cellular responses such as stimulation of protein kinase C. This is Type-1 angiotensin II receptor B (agtr1-b) from Xenopus laevis (African clawed frog).